We begin with the raw amino-acid sequence, 291 residues long: 3-hydroxy-5-phosphonooxypentane-2,4-dione thiolase (291 aa).

The active-site Schiff-base intermediate with substrate is lysine 203.

This sequence belongs to the DeoC/FbaB aldolase family. As to quaternary structure, homodecamer.

The protein localises to the cytoplasm. The enzyme catalyses dihydroxyacetone phosphate + acetyl-CoA = 3-hydroxy-2,4-dioxopentyl phosphate + CoA. Involved in the degradation of phospho-AI-2, thereby terminating induction of the lsr operon and closing the AI-2 signaling cycle. Catalyzes the transfer of an acetyl moiety from 3-hydroxy-5-phosphonooxypentane-2,4-dione to CoA to form glycerone phosphate and acetyl-CoA. This is 3-hydroxy-5-phosphonooxypentane-2,4-dione thiolase from Escherichia coli O139:H28 (strain E24377A / ETEC).